The primary structure comprises 835 residues: MTEINFQEIDKKQQKIWEDNNLFVTPRLPINPKFYCLDMFPYPSGQGLHVGHPEGYTASDILVRYKKMKGFDVIHPMGWDAFGLPAENYAIATGVHPAITTKNNIDNFRRQIKSLGMAYDWTREIDTTDPNYYRWTQWIFLQIFKKGLAYESTVPINWCPSCKTGLANEEVFNGNCERCGTKIESKNIRQWVLKITEYADRLLEDLEGLDWPESTLAMQRNWIGKSIGAEVDFEIDGHKENLKVFTTRPDTLFGATYMVVSPEHPILEQITMPEQKAAVKSYQEEAAAKTDFERGDVNKKTGVFTGAYAINPVNGKKIQIWTSDYVLMGYGTGAIMAVPAHDERDYEFAKKFGLEIIEVIKSDKGVEKEAFTGDGELVNSDFLNGMKVEQSKAAMIKFLEEKGVGGAKTTYRLRDWVFSRQRYWGEPIPIVHCPKCGVVPVPESELPVKLPEVTNYEPTGTGESPLANVPEWVNTVCPVCAGPAKRETNTMPQWAGSCWYYLRYLDPKNDKTFVNPEIERECDPVDCYIGGAEHAVLHLLYSRFWHKVLYDLGYVKYKEPYAKLRHQGMILAYSYRGEDGVYHGYDEVDLSDLQNPKLKTTGEKLNSMVEKMSKSKKNVINPDDILHKYGADAFRMYEMFMGPFEASKPWDMKGIEGVNRFLKRVYAWGESVETDEVFLSTKELDILRSKTIVKVSEDIEKFNFNTAVSALMIYFNDLSKIKGVPLKHFKTFLALLHPFAPHITEELWSRRKCGPFLVKTAWPEADIMLLRSEDMGLGIQVNGKVRGSITVNASASDDEIKAKAFEEPNVKKHMEGKALVKVIIVPKRMVNIVVK.

A 'HIGH' region motif is present at residues 41 to 52 (PYPSGQGLHVGH). The short motif at 611-615 (KMSKS) is the 'KMSKS' region element. Lys614 serves as a coordination point for ATP.

Belongs to the class-I aminoacyl-tRNA synthetase family.

Its subcellular location is the cytoplasm. It catalyses the reaction tRNA(Leu) + L-leucine + ATP = L-leucyl-tRNA(Leu) + AMP + diphosphate. This chain is Leucine--tRNA ligase, found in Elusimicrobium minutum (strain Pei191).